We begin with the raw amino-acid sequence, 366 residues long: 1-deoxy-D-xylulose 5-phosphate reductoisomerase (366 aa).

Residues Thr-7, Gly-8, Ser-9, Ile-10, Gly-31, Lys-32, Asn-33, and Asn-113 each contribute to the NADPH site. Lys-114 contributes to the 1-deoxy-D-xylulose 5-phosphate binding site. Glu-115 provides a ligand contact to NADPH. Residue Asp-133 participates in Mn(2+) binding. Residues Ser-134, Glu-135, Ser-158, and His-181 each contribute to the 1-deoxy-D-xylulose 5-phosphate site. Glu-135 is a Mn(2+) binding site. Gly-187 provides a ligand contact to NADPH. Ser-194, Asn-199, Lys-200, and Glu-203 together coordinate 1-deoxy-D-xylulose 5-phosphate. Glu-203 lines the Mn(2+) pocket.

The protein belongs to the DXR family. The cofactor is Mg(2+). Mn(2+) serves as cofactor.

The catalysed reaction is 2-C-methyl-D-erythritol 4-phosphate + NADP(+) = 1-deoxy-D-xylulose 5-phosphate + NADPH + H(+). The protein operates within isoprenoid biosynthesis; isopentenyl diphosphate biosynthesis via DXP pathway; isopentenyl diphosphate from 1-deoxy-D-xylulose 5-phosphate: step 1/6. Functionally, catalyzes the NADPH-dependent rearrangement and reduction of 1-deoxy-D-xylulose-5-phosphate (DXP) to 2-C-methyl-D-erythritol 4-phosphate (MEP). The polypeptide is 1-deoxy-D-xylulose 5-phosphate reductoisomerase (Helicobacter pylori (strain G27)).